Here is a 62-residue protein sequence, read N- to C-terminus: LKCHNTQLPFIYKTCPEGKNLCFKATLKKFPLKFPFKRGCADNCPKNSALLKYVCCSTDKCN.

4 cysteine pairs are disulfide-bonded: Cys-3/Cys-22, Cys-15/Cys-40, Cys-44/Cys-55, and Cys-56/Cys-61.

Belongs to the three-finger toxin family. Short-chain subfamily. Orphan group XV sub-subfamily. In terms of tissue distribution, expressed by the venom gland.

It localises to the secreted. Potent inhibitor of human Nav1.8/SCN10A (IC(50)=141-380 nM). Is highly selective for this channel and acts in a reversible manner. Shows a depolarizing shift of activation and hyperpolarizing shift of inactivation. In contrast to the very similar cytotoxin A5 (AC P62375), does not seem to bind integrin alpha-V/beta-3, since it does not promote or inhibit the proliferation of HUVECs and C-PAE cells. In vivo, in rodent models of inflammatory and neuropathic pain, it alleviates nociceptive behaviors more potently than does morphine. It displays no evident cytotoxic, hemolytic and cardiotoxic activities and produces no obvious adverse responses in mice even at a dose 30-fold higher than that producing a significant analgesic effect. This chain is Mu-elapitoxin-Na1a, found in Naja atra (Chinese cobra).